Consider the following 307-residue polypeptide: Malate dehydrogenase (307 aa).

NAD(+) is bound by residues 8-13 (GAGRVG) and Asp33. Arg82 and Arg88 together coordinate substrate. Residues Asn95 and 118 to 120 (VSN) contribute to the NAD(+) site. Residues Asn120 and Arg151 each coordinate substrate. His175 (proton acceptor) is an active-site residue.

Belongs to the LDH/MDH superfamily. MDH type 3 family.

The catalysed reaction is (S)-malate + NAD(+) = oxaloacetate + NADH + H(+). In terms of biological role, catalyzes the reversible oxidation of malate to oxaloacetate. The sequence is that of Malate dehydrogenase from Thioalkalivibrio sulfidiphilus (strain HL-EbGR7).